A 265-amino-acid polypeptide reads, in one-letter code: HTH-type transcriptional activator CfaD (265 aa).

One can recognise an HTH araC/xylS-type domain in the interval 164 to 261 (DKVRNVIEKD…GVTPKQFFTY (98 aa)). 2 consecutive DNA-binding regions (H-T-H motif) follow at residues 181 to 202 (GIIA…ESEN) and 228 to 251 (ISQI…NKHY).

Homodimer.

Transcriptional activator of the CFA/I adhesin (cfaA and cfaB) genes of enterotoxigenic E.coli at 37 degrees Celsius. Also represses the silencing effect of H-NS (hns). This is HTH-type transcriptional activator CfaD from Escherichia coli.